The chain runs to 312 residues: HPr kinase/phosphorylase (312 aa).

Active-site residues include His139 and Lys160. An ATP-binding site is contributed by 154 to 161; that stretch reads GDSGIGKS. Residue Ser161 coordinates Mg(2+). Asp178 serves as the catalytic Proton acceptor; for phosphorylation activity. Proton donor; for dephosphorylation activity. Residues 202-211 form an important for the catalytic mechanism of both phosphorylation and dephosphorylation region; the sequence is IEIRGVGIID. Glu203 contacts Mg(2+). Residue Arg244 is part of the active site. The important for the catalytic mechanism of dephosphorylation stretch occupies residues 265–270; the sequence is PVKTGR.

The protein belongs to the HPrK/P family. In terms of assembly, homohexamer. Mg(2+) is required as a cofactor.

The enzyme catalyses [HPr protein]-L-serine + ATP = [HPr protein]-O-phospho-L-serine + ADP + H(+). It carries out the reaction [HPr protein]-O-phospho-L-serine + phosphate + H(+) = [HPr protein]-L-serine + diphosphate. Catalyzes the ATP- as well as the pyrophosphate-dependent phosphorylation of a specific serine residue in HPr, a phosphocarrier protein of the phosphoenolpyruvate-dependent sugar phosphotransferase system (PTS). HprK/P also catalyzes the pyrophosphate-producing, inorganic phosphate-dependent dephosphorylation (phosphorolysis) of seryl-phosphorylated HPr (P-Ser-HPr). The two antagonistic activities of HprK/P are regulated by several intracellular metabolites, which change their concentration in response to the absence or presence of rapidly metabolisable carbon sources (glucose, fructose, etc.) in the growth medium. Therefore, by controlling the phosphorylation state of HPr, HPrK/P is a sensor enzyme that plays a major role in the regulation of carbon metabolism and sugar transport: it mediates carbon catabolite repression (CCR), and regulates PTS-catalyzed carbohydrate uptake and inducer exclusion. This chain is HPr kinase/phosphorylase, found in Streptococcus pneumoniae (strain ATCC BAA-255 / R6).